A 648-amino-acid chain; its full sequence is EF-hand domain-containing protein 1 (648 aa).

A required for its localization in the mitotic spindle and interaction with alpha-tubulin region spans residues 1–45 (MGTNPVHGLPFLPGSSFTDSTKTAFHRSQTLNYRNGYAVVRRPTM). 3 DM10 domains span residues 93–198 (DKKV…ESQG), 239–359 (DKQV…KDKF), and 416–520 (DNKV…ESNA). The EF-hand domain occupies 582–617 (SYKENLRETFQMYDKDESGYVDRETFFKICETLNVP).

As to quaternary structure, microtubule inner protein component of sperm flagellar doublet microtubules. Interacts with the C-terminus of CACNA1E. Interacts with alpha-tubulin. In terms of tissue distribution, expressed in adult brain including hippocampus, cerebellum, cerebral cortex, thalamus, hypothalamus, amygdala and upper brainstem. Expressed in soma and dentrites of pyramidal neurons of the hippocampal CA1 region, pyramidal neurons of the cerebral cortex and Purkinje cells of cerebellum. Highly expressed in testis, trachea, and oviduct, moderately in lung, and slightly in brain. Highly expressed in sperm flagella and tracheal cilia (at protein level).

It is found in the cytoplasm. Its subcellular location is the cytoskeleton. It localises to the cilium axoneme. The protein resides in the flagellum axoneme. The protein localises to the microtubule organizing center. It is found in the centrosome. Its subcellular location is the spindle. It localises to the spindle pole. Microtubule inner protein (MIP) part of the dynein-decorated doublet microtubules (DMTs) in cilia axoneme, which is required for motile cilia beating. Microtubule-associated protein which regulates cell division and neuronal migration during cortical development. Necessary for radial and tangential cell migration during brain development, possibly acting as a regulator of cell morphology and process formation during migration. May enhance calcium influx through CACNA1E and stimulate programmed cell death. Overexpression of EFHC1 in hippocampal primary culture neurons induced apoptosis. The polypeptide is EF-hand domain-containing protein 1 (Efhc1) (Mus musculus (Mouse)).